Reading from the N-terminus, the 309-residue chain is Probable nitrogen assimilation transcriptional activator (309 aa).

Residues 1–57 (MRLEQLQAFLKVAELGSFQQAALQSEVTQSTISRQIQGLESALKCQLFHRGAQAKLT) enclose the HTH lysR-type domain. Residues 18-38 (FQQAALQSEVTQSTISRQIQG) constitute a DNA-binding region (H-T-H motif).

Belongs to the LysR transcriptional regulatory family.

Functionally, seems to regulate utilization of fixed nitrogen by controlling the expression of a certain gene(s) involved in nitrogen metabolism. This is Probable nitrogen assimilation transcriptional activator (ntcB) from Synechocystis sp. (strain ATCC 27184 / PCC 6803 / Kazusa).